The primary structure comprises 152 residues: Immunity protein YobK (152 aa).

In terms of assembly, interacts with cognate toxin YobL but not with non-cognate putative toxin YeeF. The interaction inhibits the toxic activity of YobL.

It is found in the cytoplasm. Its function is as follows. Immunity component of one of 6 LXG toxin-immunity modules in this strain. They promote kin selection, mediate competition in biofilms, and drive spatial segregation of different strains, indicating that LXG toxins may help avoid warfare between strains in biofilms. Mediates intercellular competition during biofilm formation; disruption of the operon disadvantages the bacteria, but overexpression of the cognate immunity protein restores growth in competition with wild-type. In situ neutralizes the toxic effect of cognate toxin YobL. Neutralizes the toxic activity of cognate toxin YobL upon expression in E.coli. Does not have immunity protein activity on other LXG toxins. The sequence is that of Immunity protein YobK (yobK) from Bacillus subtilis (strain 168).